The sequence spans 77 residues: U8-lycotoxin-Ls1e (77 aa).

Positions 1–20 (MKLIIFTGLVLFAIVSLIEA) are cleaved as a signal peptide. Residues 21–26 (QAENEK) constitute a propeptide that is removed on maturation.

Belongs to the neurotoxin 19 (CSTX) family. 08 (U8-Lctx) subfamily. Contains 4 disulfide bonds. Expressed by the venom gland.

Its subcellular location is the secreted. The polypeptide is U8-lycotoxin-Ls1e (Lycosa singoriensis (Wolf spider)).